The primary structure comprises 179 residues: Acireductone dioxygenase (179 aa).

Positions 100, 102, 106, and 145 each coordinate Fe(2+). Ni(2+) is bound by residues His-100, His-102, Glu-106, and His-145.

This sequence belongs to the acireductone dioxygenase (ARD) family. In terms of assembly, monomer. Requires Fe(2+) as cofactor. Ni(2+) is required as a cofactor.

It carries out the reaction 1,2-dihydroxy-5-(methylsulfanyl)pent-1-en-3-one + O2 = 3-(methylsulfanyl)propanoate + CO + formate + 2 H(+). It catalyses the reaction 1,2-dihydroxy-5-(methylsulfanyl)pent-1-en-3-one + O2 = 4-methylsulfanyl-2-oxobutanoate + formate + 2 H(+). It functions in the pathway amino-acid biosynthesis; L-methionine biosynthesis via salvage pathway; L-methionine from S-methyl-5-thio-alpha-D-ribose 1-phosphate: step 5/6. Its function is as follows. Catalyzes 2 different reactions between oxygen and the acireductone 1,2-dihydroxy-3-keto-5-methylthiopentene (DHK-MTPene) depending upon the metal bound in the active site. Fe-containing acireductone dioxygenase (Fe-ARD) produces formate and 2-keto-4-methylthiobutyrate (KMTB), the alpha-ketoacid precursor of methionine in the methionine recycle pathway. Ni-containing acireductone dioxygenase (Ni-ARD) produces methylthiopropionate, carbon monoxide and formate, and does not lie on the methionine recycle pathway. The chain is Acireductone dioxygenase from Bacillus licheniformis (strain ATCC 14580 / DSM 13 / JCM 2505 / CCUG 7422 / NBRC 12200 / NCIMB 9375 / NCTC 10341 / NRRL NRS-1264 / Gibson 46).